The primary structure comprises 344 residues: Dihydroorotase (344 aa).

Zn(2+) contacts are provided by His-14 and His-16. Substrate is bound by residues 16-18 and Asn-42; that span reads HLR. Positions 99, 136, and 174 each coordinate Zn(2+). Lys-99 bears the N6-carboxylysine mark. His-136 contacts substrate. Residue Leu-219 participates in substrate binding. Asp-247 contacts Zn(2+). Asp-247 is a catalytic residue. Substrate contacts are provided by His-251 and Ala-263.

It belongs to the metallo-dependent hydrolases superfamily. DHOase family. Class II DHOase subfamily. As to quaternary structure, homodimer. Zn(2+) is required as a cofactor.

It carries out the reaction (S)-dihydroorotate + H2O = N-carbamoyl-L-aspartate + H(+). The protein operates within pyrimidine metabolism; UMP biosynthesis via de novo pathway; (S)-dihydroorotate from bicarbonate: step 3/3. Catalyzes the reversible cyclization of carbamoyl aspartate to dihydroorotate. The protein is Dihydroorotase of Teredinibacter turnerae (strain ATCC 39867 / T7901).